Here is a 125-residue protein sequence, read N- to C-terminus: Large ribosomal subunit protein bL12 (125 aa).

Belongs to the bacterial ribosomal protein bL12 family. In terms of assembly, homodimer. Part of the ribosomal stalk of the 50S ribosomal subunit. Forms a multimeric L10(L12)X complex, where L10 forms an elongated spine to which 2 to 4 L12 dimers bind in a sequential fashion. Binds GTP-bound translation factors.

In terms of biological role, forms part of the ribosomal stalk which helps the ribosome interact with GTP-bound translation factors. Is thus essential for accurate translation. The protein is Large ribosomal subunit protein bL12 of Granulibacter bethesdensis (strain ATCC BAA-1260 / CGDNIH1).